Reading from the N-terminus, the 676-residue chain is Cysteine-rich receptor-like protein kinase 4 (676 aa).

An N-terminal signal peptide occupies residues 1–16; the sequence is MSFFWLFPFLLHLSFA. Residues 17-287 are Extracellular-facing; it reads DSLSPLSAPV…ISERGKGRNS (271 aa). Gnk2-homologous domains follow at residues 31-135 and 146-246; these read HLNH…HRNI and ILLN…NYSF. Residues Asn33, Asn46, Asn64, Asn152, Asn181, Asn243, and Asn248 are each glycosylated (N-linked (GlcNAc...) asparagine). Residues 252–279 are disordered; that stretch reads TRSSSPPSLPPRSTPQQQLKLAPPPLIS. Asn286 carries N-linked (GlcNAc...) asparagine glycosylation. Residues 288–308 traverse the membrane as a helical segment; it reads SVIIVVVVPIIALLLLFVAFF. Residues 309 to 676 are Cytoplasmic-facing; the sequence is SLRAKKTRTN…DASITNVTPR (368 aa). The region spanning 351–631 is the Protein kinase domain; the sequence is FCETNKLGQG…QMLTTSSIAL (281 aa). ATP-binding positions include 357 to 365 and Lys379; that span reads LGQGGFGEV. Tyr424 bears the Phosphotyrosine mark. The active-site Proton acceptor is Asp476. Thr516 carries the phosphothreonine modification. Phosphotyrosine is present on Tyr524.

It belongs to the protein kinase superfamily. Ser/Thr protein kinase family. CRK subfamily.

It is found in the membrane. It carries out the reaction L-seryl-[protein] + ATP = O-phospho-L-seryl-[protein] + ADP + H(+). It catalyses the reaction L-threonyl-[protein] + ATP = O-phospho-L-threonyl-[protein] + ADP + H(+). This is Cysteine-rich receptor-like protein kinase 4 (CRK4) from Arabidopsis thaliana (Mouse-ear cress).